A 606-amino-acid polypeptide reads, in one-letter code: R-linalool synthase, chloroplastic (606 aa).

Residues 1–51 (MCTIISVNHHHVAILSKPKVKLFHTKNKRSASINLPWSLSPSSSAASRPIS) constitute a chloroplast transit peptide. Arginine 326, aspartate 363, aspartate 367, arginine 504, and aspartate 507 together coordinate (2E)-geranyl diphosphate. 2 residues coordinate Mg(2+): aspartate 363 and aspartate 367. The DDXXD motif signature appears at 363-367 (DDVYD). Residues aspartate 507, threonine 511, and glutamate 515 each contribute to the Mg(2+) site.

It belongs to the terpene synthase family. Tpsb subfamily. The cofactor is Mg(2+). It depends on Mn(2+) as a cofactor.

It is found in the plastid. It localises to the chloroplast. The catalysed reaction is (2E)-geranyl diphosphate + H2O = (R)-linalool + diphosphate. It participates in secondary metabolite biosynthesis; terpenoid biosynthesis. Monoterpene synthase that catalyzes the formation of (3R)-linalool from geranyl diphosphate, but not from farnesyl diphosphate or geranylgeranyl diphosphate. The sequence is that of R-linalool synthase, chloroplastic from Mentha aquatica (Water mint).